We begin with the raw amino-acid sequence, 1610 residues long: E3 ubiquitin-protein ligase listerin (1610 aa).

Basic and acidic residues predominate over residues 1-10 (MKKKSTDLYG). The disordered stretch occupies residues 1–20 (MKKKSTDLYGRKNPGMQSMS). 12 HEAT repeats span residues 110–148 (LKIFVFMSVLSSALQKKLAPWLKFYITPWVMGFFDSDRA), 314–351 (VPMLRLLSNMISNFPNEVHQFANDSKRPLSKLFSNLIT), 372–408 (IGAMQLVPSIESVDELCDAFLETANQEQRFLSTEVYD), 409–443 (CLLNFLSFVYTDSSDPQIKDHVRDRLRTIFTRYFK), 590–626 (SPAFTLLRDILLLLKDYADLSEPWENVANQFTVSFDE), 627–664 (LENIRVLNSLPSLFADGKLRGKISLVKTLVEYYDTAVF), 736–773 (KSLYSLLPVILFSKPEDDGHVAAHFESIFSLLKEKALE), 965–1003 (GKMPVLFKRFKNLSSAENTTSFSIFAAQGLTDFLIVVSN), 1119–1156 (CCFLRFMYYFLPTVFSLSGSYWNSIFDYIKYAMKMSVV), 1322–1354 (RVYLLVWDLIFYHFEETTYNIKLSIINQLHAMD), 1355–1393 (LLRPLLNTLVEILNLSYDRPINVDKYPKIDYNLMDYSSA), and 1435–1473 (FTGYNVSPLLISASLDDVERSIESEDFQSVGDVNVKVNR). The RING-type; atypical zinc finger occupies 1558-1604 (CAICYSVLSVERTLPNKRCGTCRHKFHASCLYKWFKSSNSSRCPLCR).

Belongs to the LTN1 family. As to quaternary structure, component of the ribosome quality control complex (RQC), composed of the E3 ubiquitin ligase rkr1/ltn1, rqc1 and mtr1/rqc2, as well as cdc48 and its ubiquitin-binding cofactors. RQC forms a stable complex with 60S ribosomal subunits.

The protein resides in the nucleus. The protein localises to the cytoplasm. Its subcellular location is the cytosol. The catalysed reaction is S-ubiquitinyl-[E2 ubiquitin-conjugating enzyme]-L-cysteine + [acceptor protein]-L-lysine = [E2 ubiquitin-conjugating enzyme]-L-cysteine + N(6)-ubiquitinyl-[acceptor protein]-L-lysine.. It functions in the pathway protein modification; protein ubiquitination. Functionally, E3 ubiquitin-protein ligase component of the ribosome quality control complex (RQC), a ribosome-associated complex that mediates ubiquitination and extraction of incompletely synthesized nascent chains for proteasomal degradation. Mediates ubiquitination of proteins derived from mRNAs lacking stop codons (non-stop proteins) and other translation arrest products induced by poly-lysine sequences and tandem rare codons. Ubiquitination leads to cdc48 recruitment for extraction and degradation of the incomplete translation product. May indirectly play a role in chromatin function and transcription. The sequence is that of E3 ubiquitin-protein ligase listerin from Schizosaccharomyces pombe (strain 972 / ATCC 24843) (Fission yeast).